The following is a 167-amino-acid chain: Leptin (167 aa).

The first 21 residues, Met1–Ala21, serve as a signal peptide directing secretion. Cys117 and Cys167 form a disulfide bridge.

The protein belongs to the leptin family.

It localises to the secreted. Its function is as follows. Key player in the regulation of energy balance and body weight control. Once released into the circulation, has central and peripheral effects by binding LEPR, found in many tissues, which results in the activation of several major signaling pathways. In the hypothalamus, acts as an appetite-regulating factor that induces a decrease in food intake and an increase in energy consumption by inducing anorexinogenic factors and suppressing orexigenic neuropeptides, also regulates bone mass and secretion of hypothalamo-pituitary-adrenal hormones. In the periphery, increases basal metabolism, influences reproductive function, regulates pancreatic beta-cell function and insulin secretion, is pro-angiogenic for endothelial cell and affects innate and adaptive immunity. In the arcuate nucleus of the hypothalamus, activates by depolarization POMC neurons inducing FOS and SOCS3 expression to release anorexigenic peptides and inhibits by hyperpolarization NPY neurons inducing SOCS3 with a consequent reduction on release of orexigenic peptides. In addition to its known satiety inducing effect, has a modulatory role in nutrient absorption. In the intestine, reduces glucose absorption by enterocytes by activating PKC and leading to a sequential activation of p38, PI3K and ERK signaling pathways which exerts an inhibitory effect on glucose absorption. Acts as a growth factor on certain tissues, through the activation of different signaling pathways increases expression of genes involved in cell cycle regulation such as CCND1, via JAK2-STAT3 pathway, or VEGFA, via MAPK1/3 and PI3K-AKT1 pathways. May also play an apoptotic role via JAK2-STAT3 pathway and up-regulation of BIRC5 expression. Pro-angiogenic, has mitogenic activity on vascular endothelial cells and plays a role in matrix remodeling by regulating the expression of matrix metalloproteinases (MMPs) and tissue inhibitors of metalloproteinases (TIMPs). In innate immunity, modulates the activity and function of neutrophils by increasing chemotaxis and the secretion of oxygen radicals. Increases phagocytosis by macrophages and enhances secretion of pro-inflammatory mediators. Increases cytotoxic ability of NK cells. Plays a pro-inflammatory role, in synergy with IL1B, by inducing NOS2 which promotes the production of IL6, IL8 and Prostaglandin E2, through a signaling pathway that involves JAK2, PI3K, MAP2K1/MEK1 and MAPK14/p38. In adaptive immunity, promotes the switch of memory T-cells towards T helper-1 cell immune responses. Increases CD4(+)CD25(-) T cells proliferation and reduces autophagy during TCR (T cell receptor) stimulation, through MTOR signaling pathway activation and BCL2 up-regulation. In Mus musculus (Mouse), this protein is Leptin (Lep).